Reading from the N-terminus, the 65-residue chain is Large ribosomal subunit protein bL35 (65 aa).

Residues 1 to 28 form a disordered region; sequence MPKIKTNRGAAKRFRKTGSGKIRRNKAF. The segment covering 10–26 has biased composition (basic residues); the sequence is AAKRFRKTGSGKIRRNK.

The protein belongs to the bacterial ribosomal protein bL35 family.

The protein is Large ribosomal subunit protein bL35 of Syntrophotalea carbinolica (strain DSM 2380 / NBRC 103641 / GraBd1) (Pelobacter carbinolicus).